The primary structure comprises 347 residues: 3-isopropylmalate dehydrogenase (347 aa).

Residue G76–E87 participates in NAD(+) binding. Substrate contacts are provided by R94, R104, R132, and D217. D217, D241, and D245 together coordinate Mg(2+). G275–N287 contributes to the NAD(+) binding site.

This sequence belongs to the isocitrate and isopropylmalate dehydrogenases family. LeuB type 1 subfamily. Homodimer. Mg(2+) is required as a cofactor. Requires Mn(2+) as cofactor.

It is found in the cytoplasm. The catalysed reaction is (2R,3S)-3-isopropylmalate + NAD(+) = 4-methyl-2-oxopentanoate + CO2 + NADH. It functions in the pathway amino-acid biosynthesis; L-leucine biosynthesis; L-leucine from 3-methyl-2-oxobutanoate: step 3/4. Catalyzes the oxidation of 3-carboxy-2-hydroxy-4-methylpentanoate (3-isopropylmalate) to 3-carboxy-4-methyl-2-oxopentanoate. The product decarboxylates to 4-methyl-2 oxopentanoate. This chain is 3-isopropylmalate dehydrogenase, found in Staphylococcus epidermidis (strain ATCC 12228 / FDA PCI 1200).